The primary structure comprises 125 residues: Barwin (125 aa).

A Pyrrolidone carboxylic acid modification is found at Gln-1. A Barwin domain is found at 1–125 (QQANDVRATY…VNYQFVDCRD (125 aa)). 3 disulfides stabilise this stretch: Cys-31–Cys-63, Cys-52–Cys-86, and Cys-66–Cys-123.

May be involved in a defense mechanism. Probable plant lectin. Binds weakly a chitin analog. This Hordeum vulgare (Barley) protein is Barwin.